Here is a 511-residue protein sequence, read N- to C-terminus: MTTHAAEAPTTDPQGAPGSQKTPDATEAEEAARATVPHRAAAAALAREHDVVPLHQEFLDDSVSPVTAFAQLCGPDEAGFLLESVPVSGGVARYSYVGHRPVPLEPTGGDPLTALRSHLARSVAPVPGLPPFHGGVVGYLGYEAARHFEDLPLAAGPPPGLPESAFLAADDLVVFDHATRRVLLMTLYRPARESYDDAVARIVRLNRALRRAPAPAAFSGRPLAAATPADHGTQGWTANLTEAQFTERVARAREHIAAGDAFQIVLSRRLSRPLRARPTDLYRHLRATNPSPYMYHLSLGGGRHVIGASPELLVKAEGRTVRTRPLAGTRPRHPDPAEDLRLERELRADEKERAEHVMLVDLGRNDLGRVTEPGTVRVERLMRVERFSHVMHLSSTVRGRLAEGRDALDALRSAFPAGTLSGAPKIRAMEIIAELEPEQRGVYGGALGFVGADGLTDFAIALRTMVVADGHVHVQAGAGIVADSDPAAEFRETLHKSRAMLTAVRRAEAAA.

The disordered stretch occupies residues 1–36 (MTTHAAEAPTTDPQGAPGSQKTPDATEAEEAARATV). The span at 11–23 (TDPQGAPGSQKTP) shows a compositional bias: polar residues. L-tryptophan-binding positions include Ser84 and 292–294 (PYM). 328-329 (GT) is a chorismate binding site. Glu355 serves as a coordination point for Mg(2+). Chorismate is bound by residues Tyr443, Arg463, 477–479 (GAG), and Gly479. Residue Glu492 participates in Mg(2+) binding.

It belongs to the anthranilate synthase component I family. In terms of assembly, heterotetramer consisting of two non-identical subunits: a beta subunit (TrpG) and a large alpha subunit (TrpE). It depends on Mg(2+) as a cofactor.

The catalysed reaction is chorismate + L-glutamine = anthranilate + pyruvate + L-glutamate + H(+). It functions in the pathway amino-acid biosynthesis; L-tryptophan biosynthesis; L-tryptophan from chorismate: step 1/5. With respect to regulation, feedback inhibited by tryptophan. In terms of biological role, part of a heterotetrameric complex that catalyzes the two-step biosynthesis of anthranilate, an intermediate in the biosynthesis of L-tryptophan. In the first step, the glutamine-binding beta subunit (TrpG) of anthranilate synthase (AS) provides the glutamine amidotransferase activity which generates ammonia as a substrate that, along with chorismate, is used in the second step, catalyzed by the large alpha subunit of AS (TrpE) to produce anthranilate. In the absence of TrpG, TrpE can synthesize anthranilate directly from chorismate and high concentrations of ammonia. The protein is Anthranilate synthase component 1 (trpE) of Streptomyces coelicolor (strain ATCC BAA-471 / A3(2) / M145).